The primary structure comprises 194 residues: Inner membrane-spanning protein YciB (194 aa).

A run of 5 helical transmembrane segments spans residues 3–23, 47–67, 76–96, 119–139, and 149–169; these read LFIE…AGIY, IPAK…LTIY, WKVT…NTFF, LNLA…YIAF, and FKVF…ILFL.

The protein belongs to the YciB family.

Its subcellular location is the cell inner membrane. Functionally, plays a role in cell envelope biogenesis, maintenance of cell envelope integrity and membrane homeostasis. The sequence is that of Inner membrane-spanning protein YciB from Colwellia psychrerythraea (strain 34H / ATCC BAA-681) (Vibrio psychroerythus).